Here is a 271-residue protein sequence, read N- to C-terminus: ATP-dependent Clp protease proteolytic subunit 6, chloroplastic (271 aa).

The disordered stretch occupies residues 1 to 30; that stretch reads MAGLAISPPLGLSFSSRTRNPKPTSFLSHN. The N-terminal 77 residues, 1-77, are a transit peptide targeting the chloroplast; it reads MAGLAISPPL…KAPRFGVIEA (77 aa). Residues 13 to 30 show a composition bias toward polar residues; it reads SFSSRTRNPKPTSFLSHN. Ser175 acts as the Nucleophile in catalysis. His200 is a catalytic residue.

The protein belongs to the peptidase S14 family. Component of the chloroplastic Clp protease core complex which consist of at least 16 proteins: CLPP4 (3 copies), CLPP5 (3 copies), CLPR4 (2 copies), ClpP1 (1 copy), CLPP6 (1 copy), CLPR2 (1 copy), CLPT1 (1 copy), CLPT2 (1 copy) and 3 copies of CLPP3 and/or CLPR1 and/or CLPR3. The core complex is organized in two heptameric rings, one containing CLPP3,4,5,6 in a 1:2:3:1 ratio and the other CLPP1 and CLPR1,2,3,4 in a 3:1:1:1:1 ratio. Mostly expressed in leaves. Also detected in stems, and to a lower extent, in roots (at protein level).

It is found in the plastid. It localises to the chloroplast stroma. The enzyme catalyses Hydrolysis of proteins to small peptides in the presence of ATP and magnesium. alpha-casein is the usual test substrate. In the absence of ATP, only oligopeptides shorter than five residues are hydrolyzed (such as succinyl-Leu-Tyr-|-NHMec, and Leu-Tyr-Leu-|-Tyr-Trp, in which cleavage of the -Tyr-|-Leu- and -Tyr-|-Trp bonds also occurs).. Functionally, cleaves peptides in various proteins in a process that requires ATP hydrolysis. Has a chymotrypsin-like activity. Plays a major role in the degradation of misfolded proteins. Essential protein required for chloroplast development and integrity. The protein is ATP-dependent Clp protease proteolytic subunit 6, chloroplastic of Arabidopsis thaliana (Mouse-ear cress).